The primary structure comprises 197 residues: Large ribosomal subunit protein mL58 (197 aa).

A mitochondrion-targeting transit peptide spans Met1 to Asn20.

This sequence belongs to the mitochondrion-specific ribosomal protein mL58 family. In terms of assembly, component of the mitochondrial large ribosomal subunit (mt-LSU). Mature yeast 74S mitochondrial ribosomes consist of a small (37S) and a large (54S) subunit. The 37S small subunit contains a 15S ribosomal RNA (15S mt-rRNA) and at least 32 different proteins. The 54S large subunit contains a 21S rRNA (21S mt-rRNA) and at least 45 different proteins.

It is found in the mitochondrion. Its function is as follows. Component of the mitochondrial ribosome (mitoribosome), a dedicated translation machinery responsible for the synthesis of mitochondrial genome-encoded proteins, including at least some of the essential transmembrane subunits of the mitochondrial respiratory chain. The mitoribosomes are attached to the mitochondrial inner membrane and translation products are cotranslationally integrated into the membrane. The protein is Large ribosomal subunit protein mL58 (mrpl20) of Schizosaccharomyces pombe (strain 972 / ATCC 24843) (Fission yeast).